Consider the following 206-residue polypeptide: Protein Nef (206 aa).

Gly2 carries the N-myristoyl glycine; by host lipid modification. The residue at position 6 (Ser6) is a Phosphoserine; by host. Positions Glu62 to Lys65 are acidic; interacts with host PACS1 and PACS2; stabilizes the interaction of NEF/MHC-I with host AP1M1; necessary for MHC-I internalization. Residues Pro69 to Pro78 are SH3-binding; interaction with Src family tyrosine kinases. The PxxP; stabilizes the interaction of NEF/MHC-I with host AP1M1; necessary for MHC-I internalization signature appears at Pro72 to Pro75. Residues Asp108–Trp124 are mediates dimerization, Nef-PTE1 interaction. Residues Val148 to Val180 form a binding to ATP6V1H region. The short motif at Leu164–Leu165 is the Dileucine internalization motif; necessary for CD4 internalization element. A Diacidic; necessary for CD4 internalization motif is present at residues Asp174 to Asp175.

This sequence belongs to the lentivirus primate group Nef protein family. In terms of assembly, monomer; cytosolic form. Homodimer; membrane bound form. Interacts with Nef associated p21-activated kinase (PAK2); this interaction activates PAK2. Associates with the Nef-MHC-I-AP1 complex; this complex is required for MHC-I internalization. Interacts (via C-terminus) with host PI3-kinase. Interacts with host PACS1; this interaction seems to be weak. Interacts with host PACS2. Interacts with host LCK and MAPK3; these interactions inhibit the kinase activity of the latter. Interacts with host ATP6V1H; this interaction may play a role in CD4 endocytosis. Associates with the CD4-Nef-AP2 complex; this complex is required for CD4 internalization. Interacts with host AP2 subunit alpha and AP2 subunit sigma2. Interacts with TCR-zeta chain; this interaction up-regulates the Fas ligand (FasL) surface expression. Interacts with host HCK, LYN, and SRC; these interactions activate the Src family kinases. Interacts with MAP3K5; this interaction inhibits the Fas and TNFR-mediated death signals. Interacts with beta-COP and PTE1. Interacts with human RACK1; this increases Nef phosphorylation by PKC. Interacts with TP53; this interaction decreases the half-life of TP53, protecting the infected cell against p53-mediated apoptosis. Post-translationally, the virion-associated Nef proteins are cleaved by the viral protease to release the soluble C-terminal core protein. Nef is probably cleaved concomitantly with viral structural proteins on maturation of virus particles. In terms of processing, myristoylated. Phosphorylated on serine residues, probably by host PKCdelta and theta.

It localises to the host cell membrane. The protein localises to the virion. The protein resides in the secreted. Its subcellular location is the host Golgi apparatus membrane. Factor of infectivity and pathogenicity, required for optimal virus replication. Alters numerous pathways of T-lymphocyte function and down-regulates immunity surface molecules in order to evade host defense and increase viral infectivity. Alters the functionality of other immunity cells, like dendritic cells, monocytes/macrophages and NK cells. In terms of biological role, in infected CD4(+) T-lymphocytes, down-regulates the surface MHC-I, mature MHC-II, CD4, CD28, CCR5 and CXCR4 molecules. Mediates internalization and degradation of host CD4 through the interaction of with the cytoplasmic tail of CD4, the recruitment of AP-2 (clathrin adapter protein complex 2), internalization through clathrin coated pits, and subsequent transport to endosomes and lysosomes for degradation. Diverts host MHC-I molecules to the trans-Golgi network-associated endosomal compartments by an endocytic pathway to finally target them for degradation. MHC-I down-regulation may involve AP-1 (clathrin adapter protein complex 1) or possibly Src family kinase-ZAP70/Syk-PI3K cascade recruited by PACS2. In consequence infected cells are masked for immune recognition by cytotoxic T-lymphocytes. Decreasing the number of immune receptors also prevents reinfection by more HIV particles (superinfection). Down-regulates host SERINC3 and SERINC5 thereby excluding these proteins from the viral particles. Virion infectivity is drastically higher when SERINC3 or SERINC5 are excluded from the viral envelope, because these host antiviral proteins impair the membrane fusion event necessary for subsequent virion penetration. Functionally, bypasses host T-cell signaling by inducing a transcriptional program nearly identical to that of anti-CD3 cell activation. Interaction with TCR-zeta chain up-regulates the Fas ligand (FasL). Increasing surface FasL molecules and decreasing surface MHC-I molecules on infected CD4(+) cells send attacking cytotoxic CD8+ T-lymphocytes into apoptosis. Its function is as follows. Plays a role in optimizing the host cell environment for viral replication without causing cell death by apoptosis. Protects the infected cells from apoptosis in order to keep them alive until the next virus generation is ready to strike. Inhibits the Fas and TNFR-mediated death signals by blocking MAP3K5/ASK1. Decreases the half-life of TP53, protecting the infected cell against p53-mediated apoptosis. Inhibits the apoptotic signals regulated by the Bcl-2 family proteins through the formation of a Nef/PI3-kinase/PAK2 complex that leads to activation of PAK2 and induces phosphorylation of host BAD. Extracellular Nef protein targets CD4(+) T-lymphocytes for apoptosis by interacting with CXCR4 surface receptors. This is Protein Nef from Homo sapiens (Human).